We begin with the raw amino-acid sequence, 739 residues long: TonB-dependent heme receptor A (739 aa).

An N-terminal signal peptide occupies residues 1 to 22; the sequence is MKMKKQCATLTFFIGLHGYTIA. One can recognise a TBDR plug domain in the interval 38–150; that stretch reads GHHERQPDRS…FAGTIKLETK (113 aa). Residues 161 to 739 form the TBDR beta-barrel domain; that stretch reads LLGGLLKYGY…NIKLSISKQF (579 aa).

It belongs to the TonB-dependent receptor family.

It is found in the cell outer membrane. Functionally, heme receptor. This is TonB-dependent heme receptor A (tdhA) from Haemophilus ducreyi (strain 35000HP / ATCC 700724).